The chain runs to 498 residues: Ribulose bisphosphate carboxylase large chain (498 aa).

Positions 1-2 (MS) are excised as a propeptide. Pro3 is subject to N-acetylproline. Lys14 carries the post-translational modification N6,N6,N6-trimethyllysine. Asn123 and Thr173 together coordinate substrate. Lys175 functions as the Proton acceptor in the catalytic mechanism. Residue Lys177 participates in substrate binding. Mg(2+) contacts are provided by Lys201, Asp203, and Glu204. Lys201 bears the N6-carboxylysine mark. His294 serves as the catalytic Proton acceptor. Positions 295, 327, and 379 each coordinate substrate. Residues 473 to 498 (DTLDPNDKKQRDNEDTLADKFFGDKG) are disordered.

Belongs to the RuBisCO large chain family. Type I subfamily. As to quaternary structure, heterohexadecamer of 8 large chains and 8 small chains; disulfide-linked. The disulfide link is formed within the large subunit homodimers. Mg(2+) serves as cofactor. The disulfide bond which can form in the large chain dimeric partners within the hexadecamer appears to be associated with oxidative stress and protein turnover.

It is found in the plastid. The catalysed reaction is 2 (2R)-3-phosphoglycerate + 2 H(+) = D-ribulose 1,5-bisphosphate + CO2 + H2O. It carries out the reaction D-ribulose 1,5-bisphosphate + O2 = 2-phosphoglycolate + (2R)-3-phosphoglycerate + 2 H(+). Its function is as follows. RuBisCO catalyzes two reactions: the carboxylation of D-ribulose 1,5-bisphosphate, the primary event in carbon dioxide fixation, as well as the oxidative fragmentation of the pentose substrate in the photorespiration process. Both reactions occur simultaneously and in competition at the same active site. The sequence is that of Ribulose bisphosphate carboxylase large chain from Cuscuta exaltata (Tall dodder).